Reading from the N-terminus, the 339-residue chain is tRNA N6-adenosine threonylcarbamoyltransferase (339 aa).

2 residues coordinate Fe cation: histidine 111 and histidine 115. Residues 134-138, aspartate 167, glycine 180, and asparagine 272 each bind substrate; that span reads LVSGG. Fe cation is bound at residue aspartate 300.

The protein belongs to the KAE1 / TsaD family. The cofactor is Fe(2+).

The protein resides in the cytoplasm. The enzyme catalyses L-threonylcarbamoyladenylate + adenosine(37) in tRNA = N(6)-L-threonylcarbamoyladenosine(37) in tRNA + AMP + H(+). In terms of biological role, required for the formation of a threonylcarbamoyl group on adenosine at position 37 (t(6)A37) in tRNAs that read codons beginning with adenine. Is involved in the transfer of the threonylcarbamoyl moiety of threonylcarbamoyl-AMP (TC-AMP) to the N6 group of A37, together with TsaE and TsaB. TsaD likely plays a direct catalytic role in this reaction. The sequence is that of tRNA N6-adenosine threonylcarbamoyltransferase from Sodalis glossinidius (strain morsitans).